A 147-amino-acid chain; its full sequence is SsrA-binding protein (147 aa).

The interval Lys-124–Ser-147 is disordered. The segment covering Lys-128–Ser-147 has biased composition (basic and acidic residues).

Belongs to the SmpB family.

It localises to the cytoplasm. Its function is as follows. Required for rescue of stalled ribosomes mediated by trans-translation. Binds to transfer-messenger RNA (tmRNA), required for stable association of tmRNA with ribosomes. tmRNA and SmpB together mimic tRNA shape, replacing the anticodon stem-loop with SmpB. tmRNA is encoded by the ssrA gene; the 2 termini fold to resemble tRNA(Ala) and it encodes a 'tag peptide', a short internal open reading frame. During trans-translation Ala-aminoacylated tmRNA acts like a tRNA, entering the A-site of stalled ribosomes, displacing the stalled mRNA. The ribosome then switches to translate the ORF on the tmRNA; the nascent peptide is terminated with the 'tag peptide' encoded by the tmRNA and targeted for degradation. The ribosome is freed to recommence translation, which seems to be the essential function of trans-translation. The protein is SsrA-binding protein of Neorickettsia sennetsu (strain ATCC VR-367 / Miyayama) (Ehrlichia sennetsu).